A 267-amino-acid chain; its full sequence is Syntaxin-72 (267 aa).

Topologically, residues 1 to 244 are cytoplasmic; it reads MPVIDIIFRV…QLVQMRSSRN (244 aa). Residues 53–87 are a coiled coil; sequence KAELASTEKNRAAAVAMNAEVRRTKARLAEDVVKL. Residues 173-235 enclose the t-SNARE coiled-coil homology domain; that stretch reads EMRRKKQDEG…KNTNVRLKKQ (63 aa). The chain crosses the membrane as a helical; Anchor for type IV membrane protein span at residues 245 to 265; it reads FCIDIILLCVILGIVSYIYNA. Over 266 to 267 the chain is Vesicular; that stretch reads LN.

Belongs to the syntaxin family. As to quaternary structure, part of the t-SNARE complex. As to expression, expressed in root, leaf, stem, flower and silique.

The protein resides in the membrane. Vesicle trafficking protein that functions in the secretory pathway. The chain is Syntaxin-72 (SYP72) from Arabidopsis thaliana (Mouse-ear cress).